We begin with the raw amino-acid sequence, 425 residues long: Probable aminotransferase tcpI (425 aa).

Lysine 256 carries the post-translational modification N6-(pyridoxal phosphate)lysine.

It belongs to the class-I pyridoxal-phosphate-dependent aminotransferase family. It depends on pyridoxal 5'-phosphate as a cofactor.

The protein operates within secondary metabolite biosynthesis. Its function is as follows. Probable aminotransferase; part of the gene cluster that mediates the biosynthesis of an unusual class of epipolythiodioxopiperazines (ETPs) lacking the reactive thiol group important for toxicity. Firstly, L-tyrosine is prenylated by tcpD, before undergoing condensation with L-glycine in a reaction catalyzed by the NRPS tcpP leading to the diketopiperazine (DKP) backbone. Afterwards the alpha-carbon of tyrosine is oxidized by the cytochrome P450 tcpC to form a hydroxyl group. However, in contrast other ETP biosynthesis pathways studied so far, tcpC is not able to bishydroxylate the DKP at both alpha-carbon positions, but hydroxylates the alpha-carbon of the tyrosine part and the nitrogen of the glycine part. The next steps involve an alpha,beta-elimination reaction catalyzed by tcpI, a methylation by the methyltransferase tcpN the action of the four enzyme cascade tcpG/K/J/I. Due to a dysfunctional cytochrome P450 monooxygenase tcpC, the pathway leads to the biosynthesis of probable non-toxic metabolites lacking the reactive thiol group. In Claviceps purpurea (strain 20.1) (Ergot fungus), this protein is Probable aminotransferase tcpI.